We begin with the raw amino-acid sequence, 89 residues long: Putative regulatory protein RBAM_015500 (89 aa).

The protein belongs to the RemA family.

The chain is Putative regulatory protein RBAM_015500 from Bacillus velezensis (strain DSM 23117 / BGSC 10A6 / LMG 26770 / FZB42) (Bacillus amyloliquefaciens subsp. plantarum).